The following is a 201-amino-acid chain: Probable molybdenum cofactor guanylyltransferase (201 aa).

GTP-binding positions include 6–8 (LAG), lysine 18, aspartate 67, and aspartate 92. Position 92 (aspartate 92) interacts with Mg(2+).

This sequence belongs to the MobA family. Requires Mg(2+) as cofactor.

Its subcellular location is the cytoplasm. It catalyses the reaction Mo-molybdopterin + GTP + H(+) = Mo-molybdopterin guanine dinucleotide + diphosphate. In terms of biological role, transfers a GMP moiety from GTP to Mo-molybdopterin (Mo-MPT) cofactor (Moco or molybdenum cofactor) to form Mo-molybdopterin guanine dinucleotide (Mo-MGD) cofactor. The sequence is that of Probable molybdenum cofactor guanylyltransferase from Thermococcus kodakarensis (strain ATCC BAA-918 / JCM 12380 / KOD1) (Pyrococcus kodakaraensis (strain KOD1)).